A 662-amino-acid polypeptide reads, in one-letter code: Carboxysome assembly protein CsoS2 (662 aa).

The segment at 1–227 is N-terminal domain; sequence MSTSNAQSGR…KRRNAKEAPQ (227 aa). Disordered regions lie at residues 1-258, 277-322, and 342-419; these read MSTS…SESG, NCDV…TCSA, and PAKS…RGSC. The N-repeat 1 repeat unit spans residues 8 to 27; the sequence is SGRAAAIARRNAQVKGKGYT. Low complexity-rich tracts occupy residues 28–57 and 64–76; these read ASAAPAAPRKPAAPVAEPVVAAAPAPSQPS and SVAPTATPAASAA. The stretch at 58-72 is one N-repeat 2 repeat; sequence RSRRKVSVAPTATPA. Over residues 120–135 the composition is skewed to basic and acidic residues; that stretch reads RQAKAEKPTKRSERRT. Residues 141-150 show a composition bias toward polar residues; the sequence is VASQQPSGRL. Residues 147–168 form an N-repeat 3 repeat; it reads SGRLQSKAYRKAQAKGKAGQEA. Low complexity-rich tracts occupy residues 161 to 170, 237 to 247, and 289 to 300; these read KGKAGQEAFK, GQSVSGTQVGQ, and VTQTQTTRGQVV. 5 M-repeat repeats span residues 228-278, 288-338, 388-436, 446-491, and 496-550; these read KVGE…SKNC, KVTQ…KMYC, KVMP…AKAC, KVTA…TEQF, and VDEQ…AMVC. A middle region region spans residues 228 to 559; it reads KVGESQTLHG…CDSTNAAAPG (332 aa). The segment covering 391–404 has biased composition (polar residues); sequence PSQTAKGNTTTGSQ. The segment at 560 to 631 is C-terminal domain; the sequence is ESDFPAMIGQ…SPMGASQYRP (72 aa). One copy of the C-repeat 1 repeat lies at 564 to 572; it reads PAMIGQAQP. Disordered regions lie at residues 588-607 and 619-662; these read KITGDGWDRGSKVTGTDGPW and AGQS…GARA. The segment at 632–662 is C-terminal peptide; sequence VNNEVPMSPITGSSGNTDTGAKVTLSGGARA. Residues 641–650 are compositionally biased toward polar residues; it reads ITGSSGNTDT.

This sequence belongs to the CsoS2 family. As to quaternary structure, interacts via its N-terminal repeats with RuBisCO. Interacts with the major shell protein CsoS1. Unlike H.neapolitanus and predictions for P.marinus strain MIT 9313, this protein is not thought to have ribosomal frameshifting.

It localises to the carboxysome. Its function is as follows. Required for alpha-carboxysome (Cb) assembly, mediates interaction between RuBisCO and the Cb shell. The protein is probably intrinsically disordered. The C-terminal repeats act as the encapsulation signal to target proteins to the Cb; they are necessary and sufficient to target both CsoS2 and foreign proteins to the Cb. The N-terminal repeats of this protein bind simultaneously to both subunits of RuBisCO. Probably also interacts with the major shell proteins (CsoS1); that interaction would increase the local concentration of CsoS2 so that it can condense RuBisCO and full carboxysomes can be formed. The protein is Carboxysome assembly protein CsoS2 of Hydrogenovibrio crunogenus (strain DSM 25203 / XCL-2) (Thiomicrospira crunogena).